Reading from the N-terminus, the 207-residue chain is Small ribosomal subunit protein uS4 (207 aa).

Residues 26–53 (KPFDVKTKKHAKAPGQHGQARGKQSEYS) are disordered. Positions 97–159 (SRLDNVVYRM…AKQQLRIKNA (63 aa)) constitute an S4 RNA-binding domain.

This sequence belongs to the universal ribosomal protein uS4 family. Part of the 30S ribosomal subunit. Contacts protein S5. The interaction surface between S4 and S5 is involved in control of translational fidelity.

In terms of biological role, one of the primary rRNA binding proteins, it binds directly to 16S rRNA where it nucleates assembly of the body of the 30S subunit. With S5 and S12 plays an important role in translational accuracy. The chain is Small ribosomal subunit protein uS4 from Acinetobacter baylyi (strain ATCC 33305 / BD413 / ADP1).